Reading from the N-terminus, the 139-residue chain is Aspartate 1-decarboxylase (139 aa).

Residue Ser-25 is the Schiff-base intermediate with substrate; via pyruvic acid of the active site. Pyruvic acid (Ser) is present on Ser-25. A substrate-binding site is contributed by Thr-57. Catalysis depends on Tyr-58, which acts as the Proton donor. 73 to 75 is a binding site for substrate; the sequence is GAA. Residues 117-139 form a disordered region; the sequence is LGADPAEPVPGSDQARSPQAVTA. Residues 130 to 139 show a composition bias toward polar residues; it reads QARSPQAVTA.

The protein belongs to the PanD family. Heterooctamer of four alpha and four beta subunits. It depends on pyruvate as a cofactor. Post-translationally, is synthesized initially as an inactive proenzyme, which is activated by self-cleavage at a specific serine bond to produce a beta-subunit with a hydroxyl group at its C-terminus and an alpha-subunit with a pyruvoyl group at its N-terminus.

Its subcellular location is the cytoplasm. The enzyme catalyses L-aspartate + H(+) = beta-alanine + CO2. Its pathway is cofactor biosynthesis; (R)-pantothenate biosynthesis; beta-alanine from L-aspartate: step 1/1. Its function is as follows. Catalyzes the pyruvoyl-dependent decarboxylation of aspartate to produce beta-alanine. This Streptomyces avermitilis (strain ATCC 31267 / DSM 46492 / JCM 5070 / NBRC 14893 / NCIMB 12804 / NRRL 8165 / MA-4680) protein is Aspartate 1-decarboxylase.